The chain runs to 197 residues: Phosphoheptose isomerase (197 aa).

Residues 36 to 197 enclose the SIS domain; it reads MVNALLNEGK…IDSQLFGSEE (162 aa). 51 to 53 is a substrate binding site; the sequence is NGG. 2 residues coordinate Zn(2+): His60 and Glu64. Residues Glu64, 93-94, 119-121, Ser124, and Gln174 contribute to the substrate site; these read ND and STS. Residues Gln174 and His182 each contribute to the Zn(2+) site.

This sequence belongs to the SIS family. GmhA subfamily. In terms of assembly, homotetramer. Zn(2+) serves as cofactor.

It is found in the cytoplasm. The enzyme catalyses 2 D-sedoheptulose 7-phosphate = D-glycero-alpha-D-manno-heptose 7-phosphate + D-glycero-beta-D-manno-heptose 7-phosphate. Its pathway is carbohydrate biosynthesis; D-glycero-D-manno-heptose 7-phosphate biosynthesis; D-glycero-alpha-D-manno-heptose 7-phosphate and D-glycero-beta-D-manno-heptose 7-phosphate from sedoheptulose 7-phosphate: step 1/1. In terms of biological role, catalyzes the isomerization of sedoheptulose 7-phosphate in D-glycero-D-manno-heptose 7-phosphate. This is Phosphoheptose isomerase from Pseudomonas putida (strain W619).